The following is a 2241-amino-acid chain: GON-4-like protein (2241 aa).

Disordered stretches follow at residues 1–46 (MLPC…SSVS) and 122–259 (KLHA…GRGQ). Basic and acidic residues predominate over residues 30 to 40 (SAVKPESDQVK). Residues 122–135 (KLHATGSKRGKKMT) show a composition bias toward basic residues. Basic and acidic residues predominate over residues 143–152 (QEDRCDHLTL). Over residues 183-201 (PSGSQSAKPVSQPRKSTQP) the composition is skewed to polar residues. Ser-206 bears the Phosphoserine mark. Over residues 243–255 (RRKKKKGTKRKRD) the composition is skewed to basic residues. Ser-346 carries the post-translational modification Phosphoserine. Positions 366–394 (EDDSSDEEYQPDDEEEDETAEESLLESDV) are enriched in acidic residues. A disordered region spans residues 366–460 (EDDSSDEEYQ…PPKPKQTRDS (95 aa)). The tract at residues 600–1339 (EMGFSNMEDD…EEAREEISGS (740 aa)) is required for interaction with YY1, SIN3A and HDAC1, and transcriptional repression activity. Residue Ser-775 is modified to Phosphoserine. Disordered stretches follow at residues 1008–1031 (PSPS…SEAP) and 1111–1131 (RKPY…SPCM). Over residues 1111-1125 (RKPYVRRRPSKRRGV) the composition is skewed to basic residues. Residue Ser-1268 is modified to Phosphoserine. Disordered regions lie at residues 1301–1320 (ALEP…TPGD) and 1356–1601 (LDTG…RARA). Positions 1386–1416 (PTKTPSSSQEPPDEGTSGTDVNKGSSKNALS) are enriched in polar residues. A Phosphoserine modification is found at Ser-1426. The span at 1434–1443 (SSSVDGQSVG) shows a compositional bias: polar residues. Acidic residues-rich tracts occupy residues 1458 to 1476 (EEEE…EDEM) and 1510 to 1534 (GESE…EAEG). Residues 1586–1600 (RNNHRARNKRGSRAR) are compositionally biased toward basic residues. PAH domains follow at residues 1624-1696 (EQKD…LLPE) and 1706-1777 (EQQA…FDHL). Residues 1809–1960 (PDVEEEEEPP…AVGSTLPSPR (152 aa)) are disordered. 2 stretches are compositionally biased toward basic and acidic residues: residues 1836 to 1848 (NHDK…DGAK) and 1879 to 1901 (CDSK…HREA). Residues Ser-1896, Ser-1902, and Ser-1977 each carry the phosphoserine modification. Disordered stretches follow at residues 2002–2025 (EVRS…AVSE), 2039–2149 (EKLP…VSST), and 2208–2241 (CEAS…ELDE). At Ser-2107 the chain carries Phosphoserine. Residues 2140-2149 (CANNSKVSST) are compositionally biased toward polar residues. Residues 2148–2201 (STGEKVVLWTREADRVILTMCQEQGAQPQTFNIISQQLGNKTPAEVSHRFRELM) form the Myb-like domain.

As to quaternary structure, found in a complex with YY1, SIN3A and HDAC1.

The protein resides in the nucleus. Its function is as follows. Has transcriptional repressor activity, probably as part of a complex with YY1, SIN3A and HDAC1. Required for B cell lymphopoiesis. This Homo sapiens (Human) protein is GON-4-like protein (GON4L).